The sequence spans 132 residues: Replication enhancer protein (132 aa).

Belongs to the geminiviridae replication enhancer protein family. As to quaternary structure, homooligomer. Interacts with the replication-associated protein (REP). Interacts with host proliferating cell nuclear antigen (PCNA). Interacts with host retinoblastoma-related protein 1 (RBR1), and may thereby deregulate the host cell cycle. Oligomerization and interaction with PCNA are necessary for optimal replication enhancement.

In terms of biological role, increases viral DNA accumulation. Enhances infectivity and symptom expression. The chain is Replication enhancer protein from Macroptilium lathyroides (Lima bean).